The primary structure comprises 221 residues: NAD(P)H-hydrate epimerase (221 aa).

Residues 10–210 (MQQIDNYTIE…DVGMLIPDDF (201 aa)) form the YjeF N-terminal domain. A (6S)-NADPHX-binding site is contributed by 58 to 62 (NNGAD). K(+) contacts are provided by N59 and D120. (6S)-NADPHX-binding positions include 124 to 130 (GVGLNNV) and D153. T156 serves as a coordination point for K(+).

It belongs to the NnrE/AIBP family. K(+) is required as a cofactor.

It catalyses the reaction (6R)-NADHX = (6S)-NADHX. It carries out the reaction (6R)-NADPHX = (6S)-NADPHX. Functionally, catalyzes the epimerization of the S- and R-forms of NAD(P)HX, a damaged form of NAD(P)H that is a result of enzymatic or heat-dependent hydration. This is a prerequisite for the S-specific NAD(P)H-hydrate dehydratase to allow the repair of both epimers of NAD(P)HX. This Leuconostoc mesenteroides subsp. mesenteroides (strain ATCC 8293 / DSM 20343 / BCRC 11652 / CCM 1803 / JCM 6124 / NCDO 523 / NBRC 100496 / NCIMB 8023 / NCTC 12954 / NRRL B-1118 / 37Y) protein is NAD(P)H-hydrate epimerase.